A 695-amino-acid chain; its full sequence is DUF724 domain-containing protein 3 (695 aa).

Positions 376–464 (ITVTPLKQQD…GTSDTIRVDD (89 aa)) are disordered. The segment covering 384-402 (QDAETEGKKSPKKTPEPVK) has biased composition (basic and acidic residues). Positions 434–459 (NQNSNLNETDETCNVSKAGVNGTSDT) are enriched in polar residues. Positions 509–694 (PFTKNLPFWK…LEFITSVLAP (186 aa)) constitute a DUF724 domain. The stretch at 614-684 (VEERKCLEKR…TIDQEIANVE (71 aa)) forms a coiled coil.

As to quaternary structure, homodimer.

May be involved in the polar growth of plant cells via transportation of RNAs. This Arabidopsis thaliana (Mouse-ear cress) protein is DUF724 domain-containing protein 3.